We begin with the raw amino-acid sequence, 874 residues long: Alanine--tRNA ligase (874 aa).

Residues H562, H566, C664, and H668 each contribute to the Zn(2+) site.

The protein belongs to the class-II aminoacyl-tRNA synthetase family. Requires Zn(2+) as cofactor.

The protein resides in the cytoplasm. The enzyme catalyses tRNA(Ala) + L-alanine + ATP = L-alanyl-tRNA(Ala) + AMP + diphosphate. Its function is as follows. Catalyzes the attachment of alanine to tRNA(Ala) in a two-step reaction: alanine is first activated by ATP to form Ala-AMP and then transferred to the acceptor end of tRNA(Ala). Also edits incorrectly charged Ser-tRNA(Ala) and Gly-tRNA(Ala) via its editing domain. In Neisseria meningitidis serogroup B (strain ATCC BAA-335 / MC58), this protein is Alanine--tRNA ligase.